A 604-amino-acid polypeptide reads, in one-letter code: Glucose-methanol-choline family oxidoreductase mfmG (604 aa).

The signal sequence occupies residues 1-24 (MYMLRPSSLLLATGLLNQGSSVLA). N-linked (GlcNAc...) asparagine glycosylation is present at N32. Residues 44–45 (TA) and 65–66 (EA) contribute to the FAD site. N76 and N97 each carry an N-linked (GlcNAc...) asparagine glycan. 126–129 (NFMA) provides a ligand contact to FAD. Residues N260, N265, N401, and N460 are each glycosylated (N-linked (GlcNAc...) asparagine). H538 (proton acceptor) is an active-site residue. Residues A572 and 584–585 (PQ) contribute to the FAD site.

The protein belongs to the GMC oxidoreductase family. As to quaternary structure, homodimer. FAD serves as cofactor.

Oxidoreductase; part of the gene cluster that mediates the biosynthesis of the phthalide-terpenoid hybrid 11'-O-desmethylfendlerol. MfmG seems not to be involved directly in the biosynthesis of 11'-O-desmethylfendlerol and its role has still to be determined. The biosynthesis of 11'-O-desmethylfendlerol begins with the NR-PKS mfmB that forms 3,5-dimethylorsellinic acid (DMOA), which is then transformed into the phthalide 5,7-dihydroxy-4-(hydroxymethyl)-6-methylphthalide by the cytochrome P450 monooxygenase mfmA and the hydrolase mfmC. Subsequently, the methyltransferase mfmE catalyzes 7-O-methylation to yield 5-hydroxy-4-(hydroxymethyl)-7-methoxy-6-methylphthalide, which undergoes C-3 hydroxylation by the cytochrome P450 monooxygenase mfmF. The resultant cyclopolic acid (2,5-dihydroxy-4-(hydroxymethyl)-7-methoxy-6-methylphthalide) is then farnesylated by the DMATS-type prenyltransferase mfmD to afford 5-O-farnesylcyclopolic acid. Finally, the Pyr4-family terpene cyclase mfmH cyclizes the farnesyl moiety of 5-O-farnesylcyclopolic acid into a drimane-like structure, thus completing the biosynthesis of 11'-O-desmethylfendlerol. The chain is Glucose-methanol-choline family oxidoreductase mfmG from Annulohypoxylon moriforme (Filamentous fungus).